Consider the following 305-residue polypeptide: Sulfate adenylyltransferase subunit 2 (305 aa).

The protein belongs to the PAPS reductase family. CysD subfamily. Heterodimer composed of CysD, the smaller subunit, and CysN.

It carries out the reaction sulfate + ATP + H(+) = adenosine 5'-phosphosulfate + diphosphate. Its pathway is sulfur metabolism; hydrogen sulfide biosynthesis; sulfite from sulfate: step 1/3. Its function is as follows. With CysN forms the ATP sulfurylase (ATPS) that catalyzes the adenylation of sulfate producing adenosine 5'-phosphosulfate (APS) and diphosphate, the first enzymatic step in sulfur assimilation pathway. APS synthesis involves the formation of a high-energy phosphoric-sulfuric acid anhydride bond driven by GTP hydrolysis by CysN coupled to ATP hydrolysis by CysD. This is Sulfate adenylyltransferase subunit 2 from Pseudomonas fluorescens (strain ATCC BAA-477 / NRRL B-23932 / Pf-5).